We begin with the raw amino-acid sequence, 1096 residues long: Serine/threonine-protein kinase mig-15 (1096 aa).

In terms of domain architecture, Protein kinase spans 21–288 (FELIEVVGNG…TGALLRHPFI (268 aa)). Residues 27–35 (VGNGTYGQV) and lysine 50 each bind ATP. Residue aspartate 151 is the Proton acceptor of the active site. Over residues 293-315 (HEQTIRHSIKEHIDRNRRVKKDD) the composition is skewed to basic and acidic residues. 4 disordered regions span residues 293-351 (HEQT…MIPM), 380-492 (LPQQ…QQSR), 517-545 (KMGGHHNGRSREESMSPPPPAPPPREASI), and 574-664 (NGEG…DLLP). Over residues 316-328 (ADYEYSGSEDDEP) the composition is skewed to acidic residues. Over residues 380-393 (LPQQPAPAPFQYQQ) the composition is skewed to low complexity. 2 stretches are compositionally biased toward basic and acidic residues: residues 397-408 (VEPRRESSEVKL) and 453-472 (NYEKRRRSEREERRERERQA). Residues 532-541 (SPPPPAPPPR) show a composition bias toward pro residues. The span at 629 to 642 (LDDDDSDSDNEEGN) shows a compositional bias: acidic residues. Residues 778 to 1070 (SGEILCAALW…KFLCERNDKV (293 aa)) enclose the CNH domain.

The protein belongs to the protein kinase superfamily. STE Ser/Thr protein kinase family. STE20 subfamily.

The enzyme catalyses L-seryl-[protein] + ATP = O-phospho-L-seryl-[protein] + ADP + H(+). It catalyses the reaction L-threonyl-[protein] + ATP = O-phospho-L-threonyl-[protein] + ADP + H(+). Involved in cell migration and signal transduction. Important in several developmental processes including epidermal development, Q neuroblast migrations and muscle arm targeting. Required with ina-1/pat-3 to stabilize the commissural axons growth cone along a precise direction and are required for the cell to respond appropriately when signaling in the growth cone must change. During gonad morphogenesis, involved in distal tip cell (DTC) migration from the dorsal side of the hermaphrodite body to the midbody to allow for formation of gonad arms. This Caenorhabditis elegans protein is Serine/threonine-protein kinase mig-15 (mig-15).